Consider the following 542-residue polypeptide: CTP synthase (542 aa).

An amidoligase domain region spans residues 1–265; that stretch reads MARYVFITGG…DSEVLSAFGI (265 aa). Serine 13 provides a ligand contact to CTP. Serine 13 is a UTP binding site. 14 to 19 is an ATP binding site; it reads SLGKGI. Tyrosine 54 contacts L-glutamine. Residue aspartate 71 coordinates ATP. Residues aspartate 71 and glutamate 139 each coordinate Mg(2+). CTP-binding positions include 146-148, 186-191, and lysine 222; these read DIE and KTKPTQ. Residues 186-191 and lysine 222 each bind UTP; that span reads KTKPTQ. The 251-residue stretch at 291–541 folds into the Glutamine amidotransferase type-1 domain; it reads TIAVVGKYTG…IEAAIEQSRL (251 aa). Glycine 353 provides a ligand contact to L-glutamine. Cysteine 380 acts as the Nucleophile; for glutamine hydrolysis in catalysis. Residues 381-384, glutamate 404, and arginine 469 contribute to the L-glutamine site; that span reads FGMQ. Residues histidine 514 and glutamate 516 contribute to the active site.

It belongs to the CTP synthase family. In terms of assembly, homotetramer.

The catalysed reaction is UTP + L-glutamine + ATP + H2O = CTP + L-glutamate + ADP + phosphate + 2 H(+). It catalyses the reaction L-glutamine + H2O = L-glutamate + NH4(+). It carries out the reaction UTP + NH4(+) + ATP = CTP + ADP + phosphate + 2 H(+). The protein operates within pyrimidine metabolism; CTP biosynthesis via de novo pathway; CTP from UDP: step 2/2. With respect to regulation, allosterically activated by GTP, when glutamine is the substrate; GTP has no effect on the reaction when ammonia is the substrate. The allosteric effector GTP functions by stabilizing the protein conformation that binds the tetrahedral intermediate(s) formed during glutamine hydrolysis. Inhibited by the product CTP, via allosteric rather than competitive inhibition. Catalyzes the ATP-dependent amination of UTP to CTP with either L-glutamine or ammonia as the source of nitrogen. Regulates intracellular CTP levels through interactions with the four ribonucleotide triphosphates. The polypeptide is CTP synthase (Brucella melitensis biotype 2 (strain ATCC 23457)).